A 49-amino-acid chain; its full sequence is Putative exported peptide YydF (49 aa).

Its function is as follows. Suggested to be the precursor for an exported, modified peptide that has antimicrobial and/or signaling properties. Synthesis requires YydG and YydH; the peptide is proposed to be exported by the YydIJ transporter. In the absence of the transporter, the modified peptide activates the LiaRS two-component regulatory system, possibly by eliciting cell envelope stress. This activation can occur in trans in cocultured cells lacking either the transporter or the whole operon. The protein is Putative exported peptide YydF (yydF) of Bacillus subtilis (strain 168).